Here is a 348-residue protein sequence, read N- to C-terminus: Cylicin-2 (348 aa).

Residues 25–347 (KKSWNQQHFA…DEKKDAKKKG (323 aa)) are 31 X 3 AA repeats of K-K-X. Disordered stretches follow at residues 35–59 (LLFPKPQRPGTKRRSKPSQIRDNTV) and 101–348 (PTRT…KKGK). 4 stretches are compositionally biased toward basic and acidic residues: residues 103-159 (RTVE…DAKK), 166-217 (KDAE…EKDS), 238-267 (KADEKKDEDGKKDANKGDESKDAKKDAKEI), and 276-342 (KPSS…EKKD). 3 tandem repeats follow at residues 157–184 (AKKDSKKGKKDAEKGKDSATESEDEKGG), 185–212 (AKKDNKKDKKDSNKGKDSATESEGEKGG), and 213–240 (TEKDSKKGKKDSKKGKDSAIELQAVKAD). A 3 X approximate tandem repeats region spans residues 157 to 240 (AKKDSKKGKK…AIELQAVKAD (84 aa)).

In terms of tissue distribution, testis.

Its subcellular location is the cytoplasm. The protein resides in the cytoskeleton. The protein localises to the perinuclear theca. It is found in the calyx. Its function is as follows. Plays a role in the establishment of normal sperm morphology during spermatogenesis. It is required for acrosome attachment to the nuclear envelope, and proper manchette elongation and disassembly. The polypeptide is Cylicin-2 (CYLC2) (Homo sapiens (Human)).